The chain runs to 200 residues: Protein RISC-INTERACTING CLEARING 3'-5' EXORIBONUCLEASE 1 (200 aa).

Oligomerization stretches follow at residues 35–66 (SKIL…KSEW), 102–127 (KFVT…IVIR), and 166–173 (DSIQSKWD).

This sequence belongs to the RICE family. Homohexamer with DnaQ-like exonuclease fold in a ring-shaped structure with a central cavity. Component of AGO1 and AGO10-centered RNA-induced silencing complexes (RISC). Interacts with and acts as a cofactor of AGO1 and AGO10. Ubiquitously expressed throughout development in germinating seeds, cotyledons, leaves and roots of young seedlings and adult plants, stems and inflorescence.

Its subcellular location is the cytoplasm. It carries out the reaction Exonucleolytic cleavage in the 3'- to 5'-direction to yield nucleoside 5'-phosphates.. Functionally, 3'-to-5' exoribonuclease (RNase) specifically targeting single-stranded RNAs. Triggers miRNA accumulation in RNA-induced silencing complex (RISC), composed of miRNAs and AGO proteins, by degrading uridylated cleavage fragments. Required during plant growth and development. In Arabidopsis thaliana (Mouse-ear cress), this protein is Protein RISC-INTERACTING CLEARING 3'-5' EXORIBONUCLEASE 1.